A 364-amino-acid polypeptide reads, in one-letter code: Metalloendoproteinase 1-MMP (364 aa).

The first 28 residues, 1 to 28 (MSRNLIYRRNRALCFVLILFCFPYRFGA), serve as a signal peptide directing secretion. The propeptide at 29–149 (RNTPEAEQST…NNDFLHTTAH (121 aa)) is activation peptide. N-linked (GlcNAc...) asparagine glycosylation is present at Asn49. The Cysteine switch motif lies at 128-135 (PRCGVSDT). Cys130 contributes to the Zn(2+) binding site. Asp211 contacts Ca(2+). Residues His221 and Asp223 each contribute to the Zn(2+) site. Ca(2+) contacts are provided by Asp228 and Gly229. Residue His236 participates in Zn(2+) binding. Residue Gly243 participates in Ca(2+) binding. His246 is a Zn(2+) binding site. Positions 248 and 251 each coordinate Ca(2+). His275 serves as a coordination point for Zn(2+). Residue Glu276 is part of the active site. Residues His279 and His285 each coordinate Zn(2+). Asn338 carries an N-linked (GlcNAc...) asparagine glycan. Gly339 is lipidated: GPI-anchor amidated glycine. The propeptide at 340–364 (TVSHRFLSGNFIGYVLLVVGLILFL) is removed in mature form.

Belongs to the peptidase M10A family. Matrix metalloproteinases (MMPs) subfamily. The cofactor is Ca(2+). Requires Zn(2+) as cofactor. As to expression, mostly expressed in flowers, roots and stems, and, to a lower extent, in leaves.

It is found in the cell membrane. Its activity is regulated as follows. Inhibited by human TIMP-1 and TIMP-2 and by the peptide hydroxamate inhibitor (BB-94). Repressed by acetohydroxamic acid (AHA). Functionally, matrix metalloproteinases (MMPs) or matrixins may play a role in the degradation and remodeling of the extracellular matrix (ECM) during development or in response to stresses. Can cleave myelin basic protein as well as fluorigenic peptide substrates, McaPLANvaDpaAR-NH(2) and McaPChaGNvaHADpa-NH(2) 4-fold more efficiently than McaPLGLDpaAR-NH(2) (QF24). Active on myelin basic protein (MBP) and, to some extent, on McaPLGLDpaAR-NH(2) (QF24) and beta-casein. The chain is Metalloendoproteinase 1-MMP from Arabidopsis thaliana (Mouse-ear cress).